The chain runs to 260 residues: Pyridoxine 5'-phosphate synthase (260 aa).

N15 serves as a coordination point for 3-amino-2-oxopropyl phosphate. 17 to 18 (DH) contributes to the 1-deoxy-D-xylulose 5-phosphate binding site. R26 serves as a coordination point for 3-amino-2-oxopropyl phosphate. H51 functions as the Proton acceptor in the catalytic mechanism. 2 residues coordinate 1-deoxy-D-xylulose 5-phosphate: R53 and H58. E78 (proton acceptor) is an active-site residue. T108 is a 1-deoxy-D-xylulose 5-phosphate binding site. H199 functions as the Proton donor in the catalytic mechanism. 3-amino-2-oxopropyl phosphate contacts are provided by residues G200 and 221-222 (GH).

Belongs to the PNP synthase family. As to quaternary structure, homooctamer; tetramer of dimers.

Its subcellular location is the cytoplasm. The enzyme catalyses 3-amino-2-oxopropyl phosphate + 1-deoxy-D-xylulose 5-phosphate = pyridoxine 5'-phosphate + phosphate + 2 H2O + H(+). It functions in the pathway cofactor biosynthesis; pyridoxine 5'-phosphate biosynthesis; pyridoxine 5'-phosphate from D-erythrose 4-phosphate: step 5/5. Its function is as follows. Catalyzes the complicated ring closure reaction between the two acyclic compounds 1-deoxy-D-xylulose-5-phosphate (DXP) and 3-amino-2-oxopropyl phosphate (1-amino-acetone-3-phosphate or AAP) to form pyridoxine 5'-phosphate (PNP) and inorganic phosphate. The polypeptide is Pyridoxine 5'-phosphate synthase (Cupriavidus pinatubonensis (strain JMP 134 / LMG 1197) (Cupriavidus necator (strain JMP 134))).